The primary structure comprises 945 residues: MNFAEEEPSKKYCIKGKHVAIICATVVAVGLIVGLSVGLTRSCEPGTTPAPSNPPPHTSTALPPQDQNVCPDSDDESGEWKNFRLPDFIQPVHYDLEVKVLMEEDRYTGIVSISVNLSKDTRDLWLHIRETRITKLPELRRPSGEQVPIRRCFEYKKQEYVVIQAEEDLAATSGDSVYRLTIEFEGWLNGSLVGFYRTTYTEDGQTKSIAATDHEPTDARKSFPCFDEPNKKATYNISLIHPKEYSALSNMPVEKKETLDNDWKKTTFMKSVPMSTYLVCFAVHQFTSIQRTSRSGKPLTVYVQPNQKQTAEYAANITKAVFDFFEDYFAMEYSLPKLDKIAIPDFGTGAMENWGLVTYRETNLLYDPLLSASSNQQRVASVVAHELVHQWFGNIVTMDWWDDLWLNEGFASFFEFLGVNHAEADWQMLSQVLLEDVLPVQEDDSLMSSHPVVVTVSTPAEITSVFDGISYSKGASILRMLQDWITPEKFQKGCQIYLENFKFKNAKTSDFWDSLEKASNQPVKEVMDTWTSQMGYPVVTVSGKQNVTQKRFLLDYKADPSQPPSALGYTWNIPIKWTENGNSNITVYYRSNREGITLNANLSGDGFLKINPDHIGFYRVNYEAETWDWIAETLSSNHMNFSSADRSSFIDDAFALARAQLLDYEKALNLTRYLTSEKDFLPWERVISAVSYIISMFEDDRELYPLIETYFRSQVKPIADSLGWQDTGSHITKLLRASVLGFACKMGAGEALGNASQLFEAWLKGNESIPVNLRLLVYRYGMQNSGNEAAWNYTLEQYQKTSLAQEKEKLLYGLASVKDVTLLARYLEMLKDPNIIKTQDVFTVIRYISYNSYGKSMAWNWIQLNWDYLVNRFTINDRYLGRIVTIAEPFNTELQLWQMQSFFAKYPNAGAGAKPREQVLETVKNNIEWLKLNRKSISEWFTSMP.

The Cytoplasmic segment spans residues 1 to 18; the sequence is MNFAEEEPSKKYCIKGKH. The chain crosses the membrane as a helical; Signal-anchor for type II membrane protein span at residues 19–39; sequence VAIICATVVAVGLIVGLSVGL. Residues 40–945 are Extracellular-facing; it reads TRSCEPGTTP…SISEWFTSMP (906 aa). The disordered stretch occupies residues 45-77; that stretch reads PGTTPAPSNPPPHTSTALPPQDQNVCPDSDDES. Asn116 and Asn189 each carry an N-linked (GlcNAc...) asparagine glycan. Glu215 contacts substrate. Residues Asn236 and Asn316 are each glycosylated (N-linked (GlcNAc...) asparagine). 349 to 353 lines the substrate pocket; sequence GAMEN. A Zn(2+)-binding site is contributed by His385. Residue Glu386 is the Proton acceptor of the active site. Positions 389 and 408 each coordinate Zn(2+). Residues Asn546, Asn584, Asn601, Asn640, Asn669, Asn754, Asn766, and Asn792 are each glycosylated (N-linked (GlcNAc...) asparagine). A substrate-binding site is contributed by Arg878.

The protein belongs to the peptidase M1 family. As to quaternary structure, homodimer; disulfide-linked. Zn(2+) is required as a cofactor. Highest expression in kidney proximal tubules and ileum enterocytes. High expression also detected in liver and pituitary. Lower levels in heart, adrenal gland and brain. Not detected in aorta, lung or spleen. In heart, higher levels in ventricle than in atrium. Also expressed in glomerular mesangial cells.

Its subcellular location is the cell membrane. The catalysed reaction is Release of N-terminal glutamate (and to a lesser extent aspartate) from a peptide.. With respect to regulation, substrate specificity is modulated by calcium which enhances the enzymatic activity for cleavage of acidic residues while reducing its activity with basic residues. Inhibited by aminopeptidase inhibitors amastatin and bestatin. In terms of biological role, regulates central hypertension through its calcium-modulated preference to cleave N-terminal acidic residues from peptides such as angiotensin II. The sequence is that of Glutamyl aminopeptidase (Enpep) from Rattus norvegicus (Rat).